Here is a 365-residue protein sequence, read N- to C-terminus: Tetratricopeptide repeat protein 19, mitochondrial (365 aa).

The N-terminal 52 residues, 1–52 (MFRLLRWRLGRTLLRAAGRRCGGCTARLLPERTGDAGTGAERLRTRGAPARG), are a transit peptide targeting the mitochondrion. TPR repeat units lie at residues 127–160 (TYTY…LLGG), 220–260 (ANTY…CQEI), 269–302 (IVLM…AREI), and 308–341 (HMVL…AELK).

Belongs to the TTC19 family. As to quaternary structure, binds to the mature mitochondrial complex III dimer, after the incorporation of the Rieske protein UQCRFS1. Interacts with UQCRC1 and UQCRFS1. Interacts with ZFYVE26 and CHMP4B. Post-translationally, proteolytically cleaved by PARL.

It is found in the mitochondrion inner membrane. Required for the preservation of the structural and functional integrity of mitochondrial respiratory complex III by allowing the physiological turnover of the Rieske protein UQCRFS1. Involved in the clearance of UQCRFS1 N-terminal fragments, which are produced upon incorporation into the complex III and whose presence is detrimental for its catalytic activity. This chain is Tetratricopeptide repeat protein 19, mitochondrial (Ttc19), found in Mus musculus (Mouse).